The primary structure comprises 347 residues: FK506-binding protein-like (347 aa).

Residues 1-24 (METSPISPMNEKNTAQPQQREENA) form a disordered region. The residue at position 3 (Thr3) is a Phosphothreonine. TPR repeat units follow at residues 208–241 (AKEE…LLTL), 250–283 (TTLY…EPGH), and 284–317 (LKAL…DPKN).

In terms of assembly, forms a ternary complex with CDKN1A/p21 and HSP90AB1/Hsp90.

Its function is as follows. May be involved in response to X-ray. Regulates p21 protein stability by binding to Hsp90 and p21. The polypeptide is FK506-binding protein-like (Fkbpl) (Mus musculus (Mouse)).